Reading from the N-terminus, the 316-residue chain is Phosphatidylglycerol--prolipoprotein diacylglyceryl transferase (316 aa).

A run of 3 helical transmembrane segments spans residues 18-38 (PIPI…AIWL), 47-67 (GGNP…GIIG), and 95-115 (NGGL…AVFF). R141 provides a ligand contact to a 1,2-diacyl-sn-glycero-3-phospho-(1'-sn-glycerol). A run of 2 helical transmembrane segments spans residues 188 to 208 (VHPT…LLMW) and 251 to 271 (INTI…FLLK). Positions 292 to 316 (AVASPDGKPLPKAGEGIDGETPSTR) are disordered.

The protein belongs to the Lgt family.

It localises to the cell membrane. It catalyses the reaction L-cysteinyl-[prolipoprotein] + a 1,2-diacyl-sn-glycero-3-phospho-(1'-sn-glycerol) = an S-1,2-diacyl-sn-glyceryl-L-cysteinyl-[prolipoprotein] + sn-glycerol 1-phosphate + H(+). The protein operates within protein modification; lipoprotein biosynthesis (diacylglyceryl transfer). Catalyzes the transfer of the diacylglyceryl group from phosphatidylglycerol to the sulfhydryl group of the N-terminal cysteine of a prolipoprotein, the first step in the formation of mature lipoproteins. In Corynebacterium glutamicum (strain ATCC 13032 / DSM 20300 / JCM 1318 / BCRC 11384 / CCUG 27702 / LMG 3730 / NBRC 12168 / NCIMB 10025 / NRRL B-2784 / 534), this protein is Phosphatidylglycerol--prolipoprotein diacylglyceryl transferase.